We begin with the raw amino-acid sequence, 169 residues long: Protein Flattop homolog (169 aa).

The interval 53 to 169 is disordered; the sequence is IPRSSRSPWG…SPKLATPEPC (117 aa). Residues 119–130 show a composition bias toward polar residues; the sequence is VQASPRNASPLQ.

It belongs to the Flattop family.

Its subcellular location is the cytoplasm. The protein resides in the cytoskeleton. The protein localises to the cilium basal body. It is found in the cell projection. It localises to the cilium. Its subcellular location is the apical cell membrane. Acts as a regulator of cilium basal body docking and positioning in mono- and multiciliated cells. The chain is Protein Flattop homolog from Nematostella vectensis (Starlet sea anemone).